The chain runs to 225 residues: Respiratory nitrate reductase 1 gamma chain (225 aa).

Met-1 is subject to N-formylmethionine. At 1-3 the chain is on the periplasmic side; that stretch reads MQF. The helical transmembrane segment at 4–29 threads the bilayer; it reads LNMFFFDIYPYIAGAVFLIGSWLRYD. Topologically, residues 30–47 are cytoplasmic; that stretch reads YGQYTWRAASSQMLDRKG. The helical transmembrane segment at 48–70 threads the bilayer; sequence MNLASNLFHIGILGIFVGHFFGM. His-56 and His-66 together coordinate heme b. Residues 71–82 are Periplasmic-facing; sequence LTPHWMYEAWLP. The chain crosses the membrane as a helical span at residues 83 to 112; that stretch reads IEVKQKMAMFAGGASGVLCLIGGVLLLKRR. Topologically, residues 113–124 are cytoplasmic; that stretch reads LFSPRVRATTTG. The helical transmembrane segment at 125–148 threads the bilayer; sequence ADILILSLLVIQCALGLLTIPFSA. The Periplasmic portion of the chain corresponds to 149-182; that stretch reads QHMDGSEMMKLVGWAQSVVTFHGGASQHLDGVAF. A helical transmembrane segment spans residues 183–198; that stretch reads IFRLHLVLGMTLFLLF. Heme b is bound by residues His-187 and His-205. Residues 199–225 are Cytoplasmic-facing; that stretch reads PFSRLIHIWSVPVEYLTRKYQLVRARH.

As to quaternary structure, dimer of heterotrimers each composed of an alpha, a beta and a gamma chain. Alpha and beta are catalytic chains; gamma chains are involved in binding the enzyme complex to the cytoplasmic membrane. The cofactor is heme.

Its subcellular location is the cell inner membrane. It catalyses the reaction nitrate + a quinol = a quinone + nitrite + H2O. The nitrate reductase enzyme complex allows E.coli to use nitrate as an electron acceptor during anaerobic growth. The gamma chain is a membrane-embedded heme-iron unit resembling cytochrome b, which transfers electrons from quinones to the beta subunit. The sequence is that of Respiratory nitrate reductase 1 gamma chain (narI) from Escherichia coli (strain K12).